We begin with the raw amino-acid sequence, 301 residues long: Tyrosine recombinase XerD (301 aa).

Positions 6–89 (PLHQQLIEQF…ALKVFFHFLK (84 aa)) constitute a Core-binding (CB) domain. One can recognise a Tyr recombinase domain in the interval 108 to 293 (RLPSILSTEE…ASESIIEKFH (186 aa)). Residues R152, K174, H245, R248, and H271 contribute to the active site. Y280 functions as the O-(3'-phospho-DNA)-tyrosine intermediate in the catalytic mechanism.

It belongs to the 'phage' integrase family. XerD subfamily. As to quaternary structure, forms a cyclic heterotetrameric complex composed of two molecules of XerC and two molecules of XerD.

The protein resides in the cytoplasm. Site-specific tyrosine recombinase, which acts by catalyzing the cutting and rejoining of the recombining DNA molecules. The XerC-XerD complex is essential to convert dimers of the bacterial chromosome into monomers to permit their segregation at cell division. It also contributes to the segregational stability of plasmids. The chain is Tyrosine recombinase XerD from Chlamydia muridarum (strain MoPn / Nigg).